A 1047-amino-acid chain; its full sequence is Ribonucleoside-diphosphate reductase subunit alpha (1047 aa).

3 ATP-cone domains span residues 9–111 (CTIV…KAHR), 118–219 (LSVV…ARVR), and 237–327 (VEVL…EALG). Substrate-binding positions include Thr442, 457 to 458 (SC), Gly486, 670 to 674 (NLCTE), and 857 to 861 (PTATI). An intrachain disulfide couples Cys458 to Cys687. Residue Asn670 is the Proton acceptor of the active site. Residue Cys672 is the Cysteine radical intermediate of the active site. Glu674 serves as the catalytic Proton acceptor.

The protein belongs to the ribonucleoside diphosphate reductase large chain family. As to quaternary structure, tetramer of two alpha and two beta subunits.

The enzyme catalyses a 2'-deoxyribonucleoside 5'-diphosphate + [thioredoxin]-disulfide + H2O = a ribonucleoside 5'-diphosphate + [thioredoxin]-dithiol. Under complex allosteric control mediated by deoxynucleoside triphosphates and ATP binding. The type of nucleotide bound at the specificity site determines substrate preference. It seems probable that ATP makes the enzyme reduce CDP and UDP, dGTP favors ADP reduction and dTTP favors GDP reduction. Functionally, provides the precursors necessary for DNA synthesis. Catalyzes the biosynthesis of deoxyribonucleotides from the corresponding ribonucleotides. This Chlamydia trachomatis serovar D (strain ATCC VR-885 / DSM 19411 / UW-3/Cx) protein is Ribonucleoside-diphosphate reductase subunit alpha (nrdA).